Reading from the N-terminus, the 561-residue chain is Urocanate hydratase (561 aa).

NAD(+) is bound by residues 52–53, Q130, 176–178, E196, R201, 242–243, 263–267, 273–274, and Y322; these read GG, GMG, NA, QTSAH, and YL. C410 is a catalytic residue. Residue G492 participates in NAD(+) binding.

Belongs to the urocanase family. Requires NAD(+) as cofactor.

It is found in the cytoplasm. The enzyme catalyses 4-imidazolone-5-propanoate = trans-urocanate + H2O. The protein operates within amino-acid degradation; L-histidine degradation into L-glutamate; N-formimidoyl-L-glutamate from L-histidine: step 2/3. Catalyzes the conversion of urocanate to 4-imidazolone-5-propionate. This is Urocanate hydratase from Enterobacter sp. (strain 638).